Consider the following 338-residue polypeptide: Methionine import ATP-binding protein MetN 1 (338 aa).

Positions 2–241 (IQLENIEKHY…PNEKLTKDFI (240 aa)) constitute an ABC transporter domain. 38-45 (GYSGAGKS) serves as a coordination point for ATP.

It belongs to the ABC transporter superfamily. Methionine importer (TC 3.A.1.24) family. In terms of assembly, the complex is composed of two ATP-binding proteins (MetN), two transmembrane proteins (MetI) and a solute-binding protein (MetQ).

The protein localises to the cell membrane. It carries out the reaction L-methionine(out) + ATP + H2O = L-methionine(in) + ADP + phosphate + H(+). The enzyme catalyses D-methionine(out) + ATP + H2O = D-methionine(in) + ADP + phosphate + H(+). Part of the ABC transporter complex MetNIQ involved in methionine import. Responsible for energy coupling to the transport system. This chain is Methionine import ATP-binding protein MetN 1, found in Oceanobacillus iheyensis (strain DSM 14371 / CIP 107618 / JCM 11309 / KCTC 3954 / HTE831).